A 54-amino-acid polypeptide reads, in one-letter code: Relaxin (54 aa).

Gln-1 bears the Pyrrolidone carboxylic acid mark. Disulfide bonds link Cys-13/Cys-41, Cys-25/Cys-54, and Cys-40/Cys-45.

It belongs to the insulin family. In terms of assembly, heterodimer of a B chain and an A chain linked by two disulfide bonds.

Its subcellular location is the secreted. In terms of biological role, the function of relaxin in an oviparous species is not yet known. This chain is Relaxin, found in Squalus acanthias (Spiny dogfish).